Here is a 203-residue protein sequence, read N- to C-terminus: Large ribosomal subunit protein bL25 (203 aa).

It belongs to the bacterial ribosomal protein bL25 family. CTC subfamily. Part of the 50S ribosomal subunit; part of the 5S rRNA/L5/L18/L25 subcomplex. Contacts the 5S rRNA. Binds to the 5S rRNA independently of L5 and L18.

In terms of biological role, this is one of the proteins that binds to the 5S RNA in the ribosome where it forms part of the central protuberance. The chain is Large ribosomal subunit protein bL25 from Wolbachia pipientis subsp. Culex pipiens (strain wPip).